The primary structure comprises 911 residues: Protein translocase subunit SecA (911 aa).

Residues Gln-87, 105–109 (GEGKT), and Asp-512 each bind ATP. The disordered stretch occupies residues 865-892 (AAEQDGAEEGAVATATAPVRSENKVGRN). Low complexity predominate over residues 873 to 883 (EGAVATATAPV). The Zn(2+) site is built by Cys-895, Cys-897, Cys-906, and His-907.

This sequence belongs to the SecA family. As to quaternary structure, monomer and homodimer. Part of the essential Sec protein translocation apparatus which comprises SecA, SecYEG and auxiliary proteins SecDF-YajC and YidC. Requires Zn(2+) as cofactor.

The protein localises to the cell inner membrane. The protein resides in the cytoplasm. The enzyme catalyses ATP + H2O + cellular proteinSide 1 = ADP + phosphate + cellular proteinSide 2.. In terms of biological role, part of the Sec protein translocase complex. Interacts with the SecYEG preprotein conducting channel. Has a central role in coupling the hydrolysis of ATP to the transfer of proteins into and across the cell membrane, serving both as a receptor for the preprotein-SecB complex and as an ATP-driven molecular motor driving the stepwise translocation of polypeptide chains across the membrane. In Ectopseudomonas mendocina (strain ymp) (Pseudomonas mendocina), this protein is Protein translocase subunit SecA.